The primary structure comprises 130 residues: Mitochondrial pyruvate carrier 1 (130 aa).

Helical transmembrane passes span 23 to 45 (LKYIFTTHFWGPVSNFGIPIAAI) and 55 to 77 (ISGPMTFALVTYSGVFMKYALSV).

Belongs to the mitochondrial pyruvate carrier (MPC) (TC 2.A.105) family. As to quaternary structure, the functional 150 kDa pyruvate import complex is a heteromer of MPC1 and either MPC2 or MPC3.

Its subcellular location is the mitochondrion. The protein resides in the mitochondrion inner membrane. In terms of biological role, mediates the uptake of pyruvate into mitochondria. In Saccharomyces cerevisiae (strain ATCC 204508 / S288c) (Baker's yeast), this protein is Mitochondrial pyruvate carrier 1.